The sequence spans 98 residues: UPF0235 protein Pmen_4153 (98 aa).

It belongs to the UPF0235 family.

This chain is UPF0235 protein Pmen_4153, found in Ectopseudomonas mendocina (strain ymp) (Pseudomonas mendocina).